A 133-amino-acid polypeptide reads, in one-letter code: Urease subunit beta (133 aa).

A disordered region spans residues 106 to 133 (VFRPNDSNQNAAVKNDAGEDNANKKGGK).

This sequence belongs to the urease beta subunit family. Heterotrimer of UreA (gamma), UreB (beta) and UreC (alpha) subunits. Three heterotrimers associate to form the active enzyme.

It localises to the cytoplasm. The catalysed reaction is urea + 2 H2O + H(+) = hydrogencarbonate + 2 NH4(+). Its pathway is nitrogen metabolism; urea degradation; CO(2) and NH(3) from urea (urease route): step 1/1. This is Urease subunit beta from Staphylococcus epidermidis (strain ATCC 12228 / FDA PCI 1200).